Reading from the N-terminus, the 715-residue chain is ATP-dependent zinc metalloprotease YME1L1 (715 aa).

Positions 31–54 (VSVNTSASPKQHRDTVAEHEAPSS) are disordered. Basic and acidic residues predominate over residues 41-52 (QHRDTVAEHEAP). A helical transmembrane segment spans residues 238–258 (ILFVLLLFGIYGLLKNPFLSV). Residues V283, T325, G326, K327, T328, and L329 each contribute to the ATP site. Residue H541 coordinates Zn(2+). E542 is a catalytic residue. Residues H545 and D619 each coordinate Zn(2+).

In the N-terminal section; belongs to the AAA ATPase family. It in the C-terminal section; belongs to the peptidase M41 family. As to quaternary structure, homohexamer; may also form heterohexamers. Exists in several complexes of 600-1100 kDa. Interacts with AFG1L. Zn(2+) serves as cofactor. Post-translationally, proteolytically processed by mitochondrial processing peptidase (MPP) to generate the mature form. Degraded in an OMA1-dependent manner in response to oxidative stress.

The protein localises to the mitochondrion inner membrane. It is found in the mitochondrion. It carries out the reaction ATP + H2O = ADP + phosphate + H(+). ATP-dependent metalloprotease that catalyzes the degradation of folded and unfolded proteins with a suitable degron sequence in the mitochondrial intermembrane region. Plays an important role in regulating mitochondrial morphology and function by cleaving OPA1 at position S2, giving rise to a form of OPA1 that promotes maintenance of normal mitochondrial structure and mitochondrial protein metabolism. Ensures cell proliferation, maintains normal cristae morphology and complex I respiration activity, promotes antiapoptotic activity and protects mitochondria from the accumulation of oxidatively damaged membrane proteins. Required to control the accumulation of nonassembled respiratory chain subunits (NDUFB6, OX4 and ND1). Involved in the mitochondrial adaptation in response to various signals, such as stress or developmental cues, by mediating degradation of mitochondrial proteins to rewire the mitochondrial proteome. Catalyzes degradation of mitochondrial proteins, such as translocases, lipid transfer proteins and metabolic enzymes in response to nutrient starvation in order to limit mitochondrial biogenesis: mechanistically, YME1L is activated by decreased phosphatidylethanolamine levels caused by LPIN1 activity in response to mTORC1 inhibition. Acts as a regulator of adult neural stem cell self-renewal by promoting mitochondrial proteome rewiring, preserving neural stem and progenitor cells self-renewal. Required for normal, constitutive degradation of PRELID1. Catalyzes the degradation of OMA1 in response to membrane depolarization. Mediates degradation of TIMM17A downstream of the integrated stress response (ISR). Catalyzes degradation of MICU1 when MICU1 is not assembled via an interchain disulfide. The protein is ATP-dependent zinc metalloprotease YME1L1 (Yme1l1) of Rattus norvegicus (Rat).